Consider the following 206-residue polypeptide: Protein phosphatase inhibitor 2 (206 aa).

The disordered stretch occupies residues 1–36; that stretch reads MAASTASHRPIKGILKNKTSAASPPVVPSAEQPRPI. A2 is modified (N-acetylalanine). A required for binding PPP1CC region spans residues 12 to 17; it reads KGILKN. The required for binding the 'RVXF' binding groove of PPP1CC stretch occupies residues 44–56; it reads KSQKWDEMNILAT. S45 is subject to Phosphoserine; by ATM. Position 74 is a phosphothreonine (T74). Residues 75 to 143 are disordered; the sequence is PYHNMIGDDE…EREKKRQFEM (69 aa). Positions 81–92 are enriched in acidic residues; it reads GDDEDAYSDSEG. Residues S88 and S90 each carry the phosphoserine modification. T97 and T117 each carry phosphothreonine. The segment covering 111–121 has biased composition (basic and acidic residues); it reads SEPKYRTREQE. 3 positions are modified to phosphoserine: S122, S123, and S131. Over residues 122–131 the composition is skewed to acidic residues; it reads SSGEEDNDLS. A compositionally biased stretch (basic and acidic residues) spans 132-143; that stretch reads PEEREKKRQFEM. Residues 148–151 form a required for binding PPP1CC catalytic center, displacing metal ions and inhibition of PPP1CC catalytic activity region; it reads HYNE. The interval 164–206 is disordered; that stretch reads KDLHDDDEDEEMAETADGDSMNVEESSQGSTTSDHLQHKSQSS. Residues 168–180 are compositionally biased toward acidic residues; that stretch reads DDDEDEEMAETAD. The span at 186–206 shows a compositional bias: polar residues; that stretch reads VEESSQGSTTSDHLQHKSQSS.

It belongs to the protein phosphatase inhibitor 2 family. In terms of assembly, heterodimer with PP1. Phosphorylation on Ser-45 by ATM activates PP1 by dissociating the PP1-PPP1R2 complex. Phosphorylation on Thr-74 by GSK3 activates PP1 by dissociating the PP1-PPP1R2 complex.

Functionally, inhibitor of protein-phosphatase 1. This is Protein phosphatase inhibitor 2 (Ppp1r2) from Mus musculus (Mouse).